A 408-amino-acid chain; its full sequence is MVQINGSYLKLKAGYLFPEISRRVNDFSTANPKADLIRLGIGDVTEPLPKACCNAMQLAIEEMSTEAGFHGYGPEQGYSWLREAIAKFAYQARNCEITPEEIFVSDGSKCDSSNILDILGDNNRIAVTDPVYPVYVDSNVMVGRTGLAEKSGRYQGLSYIPMNAENGFEAEIPSEHFDLIYLCFPNNPTGSVATKEQLMRWVEYAKNHDALILFDAAYEAFIQDPELPHSIYEIDGARDCAIEFRSFSKNAGFTGTRCAFTVIPKCLRGRSPSNDEVDLWSLWNRRQSTKFNGVSYIVQRGAEAVYSPEGQSQVSDLISFYMDNAQIIRSQLSSIGLQVYGGQNAPYAWIKTPEGMDSWAFFDYLLQKANVVGTPGSGFGSSGEGYFRLSAFNSRNKVNEAMRRITSI.

Substrate-binding residues include tyrosine 15 and glycine 42. Pyridoxal 5'-phosphate is bound by residues tyrosine 72, 108–109 (SK), tyrosine 132, asparagine 187, tyrosine 218, and 246–248 (SFS). Residues lysine 109, tyrosine 132, and asparagine 187 each contribute to the substrate site. N6-(pyridoxal phosphate)lysine is present on lysine 249. 2 residues coordinate pyridoxal 5'-phosphate: arginine 257 and asparagine 292. Residues asparagine 292 and arginine 388 each coordinate substrate.

Belongs to the class-I pyridoxal-phosphate-dependent aminotransferase family. LL-diaminopimelate aminotransferase subfamily. As to quaternary structure, homodimer. The cofactor is pyridoxal 5'-phosphate.

It carries out the reaction (2S,6S)-2,6-diaminopimelate + 2-oxoglutarate = (S)-2,3,4,5-tetrahydrodipicolinate + L-glutamate + H2O + H(+). Its pathway is amino-acid biosynthesis; L-lysine biosynthesis via DAP pathway; LL-2,6-diaminopimelate from (S)-tetrahydrodipicolinate (aminotransferase route): step 1/1. Its function is as follows. Involved in the synthesis of meso-diaminopimelate (m-DAP or DL-DAP), required for both lysine and peptidoglycan biosynthesis. Catalyzes the direct conversion of tetrahydrodipicolinate to LL-diaminopimelate. This chain is LL-diaminopimelate aminotransferase, found in Prochlorococcus marinus (strain MIT 9211).